We begin with the raw amino-acid sequence, 315 residues long: Methionyl-tRNA formyltransferase (315 aa).

Serine 114–proline 117 provides a ligand contact to (6S)-5,6,7,8-tetrahydrofolate.

It belongs to the Fmt family.

It carries out the reaction L-methionyl-tRNA(fMet) + (6R)-10-formyltetrahydrofolate = N-formyl-L-methionyl-tRNA(fMet) + (6S)-5,6,7,8-tetrahydrofolate + H(+). Functionally, attaches a formyl group to the free amino group of methionyl-tRNA(fMet). The formyl group appears to play a dual role in the initiator identity of N-formylmethionyl-tRNA by promoting its recognition by IF2 and preventing the misappropriation of this tRNA by the elongation apparatus. This chain is Methionyl-tRNA formyltransferase, found in Corynebacterium glutamicum (strain R).